We begin with the raw amino-acid sequence, 35 residues long: Beta/delta-theraphotoxin-Pre1a (35 aa).

3 disulfides stabilise this stretch: Cys-3/Cys-18, Cys-10/Cys-23, and Cys-17/Cys-30.

It belongs to the neurotoxin 10 (Hwtx-1) family. As to expression, expressed by the venom gland.

It is found in the secreted. In terms of biological role, gating-modifier toxin that both inhibits the peak current of human Nav1.1/SCN1A, rat Nav1.2/SCN2A, human Nav1.6/SCN8A, and human Nav1.7/SCN9A and concurrently inhibits fast inactivation of human Nav1.1 and rat Nav1.3/SCN3A. The relative rank order potency for Nav modulation is Nav1.3 (inactivation EC(50)=45 nM) &gt; Nav1.7 &gt; Nav1.2 &gt; Nav1.1 (inactivation) &gt; Nav1.1 &gt; Nav1.6 &gt; Nav1.3 (IC(50)=8 uM). The DII and DIV S3-S4 loops of Nav channel voltage sensors are important for the interaction of this toxin with Nav channels but cannot account for its unique subtype selectivity. It is the variability of the S1-S2 loops between NaV channels which contributes substantially to the selectivity profile observed for this toxin, particularly with regards to fast inactivation. This toxin may bind the channel in the resting state. The chain is Beta/delta-theraphotoxin-Pre1a from Psalmopoeus reduncus (Costa Rican orangemouth tarantula).